A 169-amino-acid polypeptide reads, in one-letter code: 6,7-dimethyl-8-ribityllumazine synthase (169 aa).

5-amino-6-(D-ribitylamino)uracil is bound by residues Phe24, 58 to 60 (ALE), and 82 to 84 (AVV). Residue 87–88 (ET) participates in (2S)-2-hydroxy-3-oxobutyl phosphate binding. His90 functions as the Proton donor in the catalytic mechanism. 5-amino-6-(D-ribitylamino)uracil is bound at residue Asn115. (2S)-2-hydroxy-3-oxobutyl phosphate is bound at residue Arg129.

It belongs to the DMRL synthase family.

The catalysed reaction is (2S)-2-hydroxy-3-oxobutyl phosphate + 5-amino-6-(D-ribitylamino)uracil = 6,7-dimethyl-8-(1-D-ribityl)lumazine + phosphate + 2 H2O + H(+). It functions in the pathway cofactor biosynthesis; riboflavin biosynthesis; riboflavin from 2-hydroxy-3-oxobutyl phosphate and 5-amino-6-(D-ribitylamino)uracil: step 1/2. Catalyzes the formation of 6,7-dimethyl-8-ribityllumazine by condensation of 5-amino-6-(D-ribitylamino)uracil with 3,4-dihydroxy-2-butanone 4-phosphate. This is the penultimate step in the biosynthesis of riboflavin. The protein is 6,7-dimethyl-8-ribityllumazine synthase of Cupriavidus metallidurans (strain ATCC 43123 / DSM 2839 / NBRC 102507 / CH34) (Ralstonia metallidurans).